We begin with the raw amino-acid sequence, 308 residues long: HTH-type transcriptional activator AllS (308 aa).

The HTH lysR-type domain maps to 2-59 (FDPETLRTFISVAETGSFSKAAERLCKTTATISYRIKLLEENTGVGLFFRTTRSVSLT). Residues 19-38 (FSKAAERLCKTTATISYRIK) constitute a DNA-binding region (H-T-H motif).

This sequence belongs to the LysR transcriptional regulatory family.

Its function is as follows. Positive regulator essential for the expression of allD operon. Binds to the allD promoter. This is HTH-type transcriptional activator AllS (allS) from Salmonella paratyphi A (strain ATCC 9150 / SARB42).